The chain runs to 431 residues: Glucose-1-phosphate adenylyltransferase (431 aa).

Lys-39 provides a ligand contact to beta-D-fructose 1,6-bisphosphate. 3 residues coordinate AMP: Arg-40, His-46, and Arg-52. Tyr-114 serves as a coordination point for alpha-D-glucose 1-phosphate. Arg-130 contributes to the AMP binding site. Residues Gly-179, 194 to 195, and Ser-212 contribute to the alpha-D-glucose 1-phosphate site; that span reads EK. Residue Arg-386 coordinates AMP. 429–431 contributes to the beta-D-fructose 1,6-bisphosphate binding site; the sequence is QER.

Belongs to the bacterial/plant glucose-1-phosphate adenylyltransferase family. As to quaternary structure, homotetramer.

The catalysed reaction is alpha-D-glucose 1-phosphate + ATP + H(+) = ADP-alpha-D-glucose + diphosphate. It participates in glycan biosynthesis; glycogen biosynthesis. With respect to regulation, allosterically activated by fructose-1,6-bisphosphate (F16BP) and inhibited by AMP. In terms of biological role, involved in the biosynthesis of ADP-glucose, a building block required for the elongation reactions to produce glycogen. Catalyzes the reaction between ATP and alpha-D-glucose 1-phosphate (G1P) to produce pyrophosphate and ADP-Glc. In Klebsiella pneumoniae subsp. pneumoniae (strain ATCC 700721 / MGH 78578), this protein is Glucose-1-phosphate adenylyltransferase.